Consider the following 248-residue polypeptide: Mannose-binding protein C (248 aa).

A signal peptide spans 1-20; that stretch reads MSLIPSLSLLLMSMVAASYS. The region spanning 42-99 is the Collagen-like domain; the sequence is GINGFPGKDGRDGTKGEKGEPGQGLRGLQGPPGKLGPPGNPGPSGSPGPKGQKGDPGN. The tract at residues 43–110 is disordered; that stretch reads INGFPGKDGR…PDCDSSLAVS (68 aa). Position 47 is a 4-hydroxyproline (proline 47). Residues 49-61 are compositionally biased toward basic and acidic residues; that stretch reads KDGRDGTKGEKGE. 4 positions are modified to 4-hydroxyproline: proline 73, proline 79, proline 82, and proline 88. Residues 75–87 are compositionally biased toward pro residues; it reads KLGPPGNPGPSGS. A coiled-coil region spans residues 112–130; that stretch reads RKALQTEMARIKKWLTFSL. In terms of domain architecture, C-type lectin spans 134-245; sequence VGNKFFLTNG…CSSSHLAVCE (112 aa). 2 disulfide bridges follow: cysteine 155–cysteine 244 and cysteine 222–cysteine 236.

Oligomeric complex of 3 or more homotrimers. Interacts with MASP1 and MASP2. Interacts with MEP1A and MEP1B and may inhibit their catalytic activity. Hydroxylation on proline residues within the sequence motif, GXPG, is most likely to be 4-hydroxy as this fits the requirement for 4-hydroxylation in vertebrates.

It is found in the secreted. In terms of biological role, calcium-dependent lectin involved in innate immune defense. Binds mannose, fucose and N-acetylglucosamine on different microorganisms and activates the lectin complement pathway. Binds to late apoptotic cells, as well as to apoptotic blebs and to necrotic cells, but not to early apoptotic cells, facilitating their uptake by macrophages. This is Mannose-binding protein C (MBL2) from Nomascus concolor (Black crested gibbon).